Reading from the N-terminus, the 365-residue chain is Histidinol-phosphate aminotransferase (365 aa).

Lys-220 is modified (N6-(pyridoxal phosphate)lysine).

The protein belongs to the class-II pyridoxal-phosphate-dependent aminotransferase family. Histidinol-phosphate aminotransferase subfamily. Homodimer. It depends on pyridoxal 5'-phosphate as a cofactor.

The enzyme catalyses L-histidinol phosphate + 2-oxoglutarate = 3-(imidazol-4-yl)-2-oxopropyl phosphate + L-glutamate. Its pathway is amino-acid biosynthesis; L-histidine biosynthesis; L-histidine from 5-phospho-alpha-D-ribose 1-diphosphate: step 7/9. The protein is Histidinol-phosphate aminotransferase of Neisseria meningitidis serogroup B (strain ATCC BAA-335 / MC58).